Consider the following 293-residue polypeptide: 4-hydroxy-tetrahydrodipicolinate synthase (293 aa).

T47 is a pyruvate binding site. Residue Y136 is the Proton donor/acceptor of the active site. The Schiff-base intermediate with substrate role is filled by K164. I206 provides a ligand contact to pyruvate.

Belongs to the DapA family. As to quaternary structure, homotetramer; dimer of dimers.

It localises to the cytoplasm. It catalyses the reaction L-aspartate 4-semialdehyde + pyruvate = (2S,4S)-4-hydroxy-2,3,4,5-tetrahydrodipicolinate + H2O + H(+). Its pathway is amino-acid biosynthesis; L-lysine biosynthesis via DAP pathway; (S)-tetrahydrodipicolinate from L-aspartate: step 3/4. Its function is as follows. Catalyzes the condensation of (S)-aspartate-beta-semialdehyde [(S)-ASA] and pyruvate to 4-hydroxy-tetrahydrodipicolinate (HTPA). The polypeptide is 4-hydroxy-tetrahydrodipicolinate synthase (Listeria monocytogenes serovar 1/2a (strain ATCC BAA-679 / EGD-e)).